Reading from the N-terminus, the 295-residue chain is Zinc finger transcription factor pqm-1 (295 aa).

Positions 1 to 23 are disordered; sequence MSFLNNDFGSPPATSSPPTTMPK. The span at 10–22 shows a compositional bias: low complexity; the sequence is SPPATSSPPTTMP. The C2H2-type 1; degenerate zinc finger occupies 161 to 183; sequence YMCTVCRKVYGRYNSVSYHVTIY. Residues 227–249 form a C2H2-type 2 zinc finger; the sequence is RKCPHCRHVSKSPAMLEKHIRRH.

It belongs to the krueppel C2H2-type zinc-finger protein family. Interacts with ceh-60.

The protein resides in the chromosome. It localises to the nucleus. The protein localises to the cytoplasm. Its function is as follows. Zinc finger transcription factor which acts as both a transcriptional activator and repressor. Binds to the promoters of genes that contain the 5'-CTTATCA-3' DNA consensus sequence in their regulatory region. Functions downstream of the Insulin/IGF-1-like signaling (IIS) mediated pathway. Involved in normal development, lifespan, stress response, lipid metabolism, innate immunity and exit from the developmentally arrested larval state known as dauer. Required for stress-induced expression of hsp-90 and resistance to heat stress, perhaps as part of a systemic stress signaling pathway. Involved in maintenance of proteostasis. Under hypoxic stress increases lipid levels by positively regulating fatty acid synthesis via fat-7 expression. Associates with homeobox protein ceh-60 at the promoters of some stress-responsive genes to regulate expression; may require phosphorylation for transcriptional repression activity. Acts downstream of nhr-14 to activate transcription of intestinal metal transporter smf-3, modulating innate immunity and iron uptake. May act downstream of the mTORC2 signaling mediated pathway. May act in a mutually exclusive manner with the FOXO transcription factor daf-16. In Caenorhabditis elegans, this protein is Zinc finger transcription factor pqm-1.